The following is a 975-amino-acid chain: FHF complex subunit HOOK-interacting protein 1B (975 aa).

Residues alanine 465–proline 496 are disordered. The residue at position 467 (serine 467) is a Phosphoserine. Over residues serine 482–proline 496 the composition is skewed to low complexity. Phosphoserine occurs at positions 510, 523, 529, and 533. Disordered regions lie at residues leucine 511–glutamate 548, serine 573–valine 621, and serine 690–cysteine 717. Residues threonine 527–proline 538 show a composition bias toward low complexity. A compositionally biased stretch (basic and acidic residues) spans leucine 597–glutamate 608. Serine 863 is subject to Phosphoserine. At threonine 892 the chain carries Phosphothreonine. Serine 900 is modified (phosphoserine).

This sequence belongs to the FHIP family. As to quaternary structure, component of the FTS/Hook/FHIP complex (FHF complex), composed of AKTIP/FTS, FHIP1B, and one or more members of the Hook family of proteins HOOK1, HOOK2, and HOOK3. The FHF complex associates with the homotypic vesicular sorting complex (the HOPS complex).

Functionally, component of the FTS/Hook/FHIP complex (FHF complex). The FHF complex may function to promote vesicle trafficking and/or fusion via the homotypic vesicular protein sorting complex (the HOPS complex). FHF complex promotes the distribution of AP-4 complex to the perinuclear area of the cell. The polypeptide is FHF complex subunit HOOK-interacting protein 1B (Mus musculus (Mouse)).